The chain runs to 389 residues: MTSRKPLGRYRRIVIKIGSALLVDRKAGLKKAWLDAMCADISGLKAKGIDVLVVSSGAIALGRSVLDLPSGALKLEESQAAAAVGQIALARAWSESLSRDEIVAGQILLTLGDTEERRRYLNARATINQLLKIGAVPIINENDTVATSEIRYGDNDRLAARVATMTGADLLILLSDIDGLYTAPPHLDPNATFLETIAEITPEIEAMAGGAASELSRGGMRTKIDAGKIATASGCAMIIASGKTENPLSAIENGARSSWFAPSGTPVTARKTWIAGQLQPAGELHVDDGAVTALGAGKSLLPAGVRSVSGLFSRGDTVAIIGPAGREIARGLVSYDADDARRIAGRKSAEIETILGYPGRAAMVHRDDMVMTAQIGSKSERQKKDASYA.

Lys-16 contributes to the ATP binding site. Residues Ser-56, Asp-143, and Asn-155 each contribute to the substrate site. 175-176 contacts ATP; sequence SD. The 78-residue stretch at 281–358 folds into the PUA domain; sequence AGELHVDDGA…AEIETILGYP (78 aa).

The protein belongs to the glutamate 5-kinase family.

The protein resides in the cytoplasm. It carries out the reaction L-glutamate + ATP = L-glutamyl 5-phosphate + ADP. It functions in the pathway amino-acid biosynthesis; L-proline biosynthesis; L-glutamate 5-semialdehyde from L-glutamate: step 1/2. Functionally, catalyzes the transfer of a phosphate group to glutamate to form L-glutamate 5-phosphate. The polypeptide is Glutamate 5-kinase (Rhizobium johnstonii (strain DSM 114642 / LMG 32736 / 3841) (Rhizobium leguminosarum bv. viciae)).